The chain runs to 441 residues: Damage-control phosphatase ARMT1 (441 aa).

At Ala2 the chain carries N-acetylalanine. Lys40 carries the post-translational modification N6-acetyllysine. Ser102 is subject to Phosphoserine. The Mn(2+) site is built by Asp253 and Asn254. Residue 253-254 (DN) participates in substrate binding. S-adenosyl-L-methionine contacts are provided by Glu258 and Asp291. Asp291 is a binding site for Mn(2+). Substrate is bound by residues 367–371 (DLNYR) and Lys404. The Subfamily III RTxK motif motif lies at 401–404 (RTLK).

The protein belongs to the damage-control phosphatase family. Sugar phosphate phosphatase III subfamily. Mn(2+) is required as a cofactor. Requires Ni(2+) as cofactor. In terms of processing, automethylated.

It catalyses the reaction beta-D-fructose 1-phosphate + H2O = D-fructose + phosphate. It carries out the reaction beta-D-fructose 6-phosphate = dihydroxyacetone + D-glyceraldehyde 3-phosphate. The catalysed reaction is L-glutamyl-[protein] + S-adenosyl-L-methionine = [protein]-L-glutamate 5-O-methyl ester + S-adenosyl-L-homocysteine. Functionally, metal-dependent phosphatase that shows phosphatase activity against several substrates, including fructose-1-phosphate and fructose-6-phosphate. Its preference for fructose-1-phosphate, a strong glycating agent that causes DNA damage rather than a canonical yeast metabolite, suggests a damage-control function in hexose phosphate metabolism. Has also been shown to have O-methyltransferase activity that methylates glutamate residues of target proteins to form gamma-glutamyl methyl ester residues. Possibly methylates PCNA, suggesting it is involved in the DNA damage response. The chain is Damage-control phosphatase ARMT1 from Macaca fascicularis (Crab-eating macaque).